A 163-amino-acid chain; its full sequence is Putative pre-16S rRNA nuclease (163 aa).

The protein belongs to the YqgF nuclease family.

The protein localises to the cytoplasm. Could be a nuclease involved in processing of the 5'-end of pre-16S rRNA. This Chlamydia caviae (strain ATCC VR-813 / DSM 19441 / 03DC25 / GPIC) (Chlamydophila caviae) protein is Putative pre-16S rRNA nuclease.